A 101-amino-acid chain; its full sequence is Protein translation factor SUI1 homolog (101 aa).

The protein belongs to the SUI1 family.

In Methanosphaera stadtmanae (strain ATCC 43021 / DSM 3091 / JCM 11832 / MCB-3), this protein is Protein translation factor SUI1 homolog.